Here is a 548-residue protein sequence, read N- to C-terminus: Probable malate:quinone oxidoreductase (548 aa).

The segment at 522-548 (KPQAADSTPKPQLKPKPVQKEVADIAL) is disordered. Residues 539–548 (VQKEVADIAL) show a composition bias toward basic and acidic residues.

The protein belongs to the MQO family. Requires FAD as cofactor.

The enzyme catalyses (S)-malate + a quinone = a quinol + oxaloacetate. The protein operates within carbohydrate metabolism; tricarboxylic acid cycle; oxaloacetate from (S)-malate (quinone route): step 1/1. The protein is Probable malate:quinone oxidoreductase of Escherichia coli O9:H4 (strain HS).